The following is a 384-amino-acid chain: Beta-glucuronosyltransferase GlcAT14C (384 aa).

At 1–11 (MKRSHISSPRS) the chain is on the cytoplasmic side. A signal-anchor for type II membrane protein transmembrane segment spans residues 12 to 34 (YSRPAISIFGVFLLFLLVLTLSS). The Lumenal portion of the chain corresponds to 35-384 (RKPSDSSSGL…HENFRAKQCK (350 aa)). Residues Asn156, Asn285, and Asn306 are each glycosylated (N-linked (GlcNAc...) asparagine).

The protein belongs to the glycosyltransferase 14 family.

Its subcellular location is the golgi apparatus membrane. Functionally, beta-glucuronosyltransferase involved in the biosynthesis of type II arabinogalactan (AG). Modifies both the beta-1,6-linked galactan and beta-1,3-linked galactan present in type II AG. The sequence is that of Beta-glucuronosyltransferase GlcAT14C from Arabidopsis thaliana (Mouse-ear cress).